The following is a 400-amino-acid chain: MGGWSAKPRKGMGTNLSVPNPLGFFPDHQLDPAFGANSNNPDWDFNPNKDHWPEANQVGVGAFGPGFTPPHGGLLGWSSQAQGTLHTVPAVPPPASTNRQTGRQPTPISPPLRDSHPQAMQWNSTAFQQALQDPRVRGLFFPAGGSSSGTVNPAPNIASHISSISSRTGDPALNMENITSGFLGPLLVLQAGFFLLTRILTIPQSLDSWWTSLNFLGGSPVCLGQNSQSPTSNHSPTSCPPICPGYRWMCLRRFIIFLFILLLCLIFLLVLLDYQGMLPVCPLIPGSTTTSTGPCKTCTTPAQGNSMFPSCCCTKPTDGNCTCIPIPSSWAFAKYLWEWASVRFSWLSLLVPFVQWFVGLSPTVWLSVIWMMWYWGPSLYNILSPFIPLLPIFFCLWVYI.

M1 is modified (N-acetylmethionine). A disordered region spans residues M1–N20. Residue G2 is the site of N-myristoyl glycine; by host attachment. Residues G2 to A119 are pre-S1. Residues G2–N174 form a pre-S region. Residues G2–G181 lie on the Virion surface; in external conformation side of the membrane. Topologically, residues G2–R253 are intravirion; in internal conformation. N-linked (GlcNAc...) asparagine glycosylation occurs at W4. Residues M120–N174 are pre-S2. Residues F182–I202 traverse the membrane as a helical segment. Over P203–R253 the chain is Intravirion; in external conformation. A helical membrane pass occupies residues F254–Y274. Residues Q275–S348 are Virion surface-facing. N-linked (GlcNAc...) asparagine; by host glycosylation occurs at N320. Residues L349–I369 form a helical membrane-spanning segment. Topologically, residues W370–W375 are intravirion. Residues G376–V398 traverse the membrane as a helical segment. Residues Y399–I400 lie on the Virion surface side of the membrane.

The protein belongs to the orthohepadnavirus major surface antigen family. As to quaternary structure, in its internal form (Li-HBsAg), interacts with the capsid protein and with the isoform S. Interacts with host chaperone CANX. Associates with host chaperone CANX through its pre-S2 N glycan; this association may be essential for isoform M proper secretion. In terms of assembly, interacts with isoform L. Interacts with the antigens of satellite virus HDV (HDVAgs); this interaction is required for encapsidation of HDV genomic RNA. In terms of processing, isoform M is N-terminally acetylated by host at a ratio of 90%, and N-glycosylated by host at the pre-S2 region. Myristoylated.

The protein resides in the virion membrane. Its function is as follows. The large envelope protein exists in two topological conformations, one which is termed 'external' or Le-HBsAg and the other 'internal' or Li-HBsAg. In its external conformation the protein attaches the virus to cell receptors and thereby initiating infection. This interaction determines the species specificity and liver tropism. This attachment induces virion internalization predominantly through caveolin-mediated endocytosis. The large envelope protein also assures fusion between virion membrane and endosomal membrane. In its internal conformation the protein plays a role in virion morphogenesis and mediates the contact with the nucleocapsid like a matrix protein. Functionally, the middle envelope protein plays an important role in the budding of the virion. It is involved in the induction of budding in a nucleocapsid independent way. In this process the majority of envelope proteins bud to form subviral lipoprotein particles of 22 nm of diameter that do not contain a nucleocapsid. This Hepatitis B virus genotype A1 subtype adw2 (isolate Southern-Africa/Cai) (HBV-A) protein is Large envelope protein.